A 622-amino-acid chain; its full sequence is Glutamyl-tRNA(Gln) amidotransferase subunit B, mitochondrial (622 aa).

Residues 1 to 54 constitute a mitochondrion transit peptide; that stretch reads MSRIPTRELGRYLLQGQICQRGCVASSVSKSRAKQLGRHPLLPHDRHQPTQARH. The tract at residues 30 to 67 is disordered; it reads KSRAKQLGRHPLLPHDRHQPTQARHAHTVTTTATPTQL. The segment covering 57–67 has biased composition (low complexity); the sequence is TVTTTATPTQL.

It belongs to the GatB/GatE family. GatB subfamily. As to quaternary structure, subunit of the heterotrimeric GatCAB amidotransferase (AdT) complex, composed of A, B and C subunits.

It localises to the mitochondrion. It carries out the reaction L-glutamyl-tRNA(Gln) + L-glutamine + ATP + H2O = L-glutaminyl-tRNA(Gln) + L-glutamate + ADP + phosphate + H(+). Allows the formation of correctly charged Gln-tRNA(Gln) through the transamidation of misacylated Glu-tRNA(Gln) in the mitochondria. The reaction takes place in the presence of glutamine and ATP through an activated gamma-phospho-Glu-tRNA(Gln). The protein is Glutamyl-tRNA(Gln) amidotransferase subunit B, mitochondrial of Verticillium alfalfae (strain VaMs.102 / ATCC MYA-4576 / FGSC 10136) (Verticillium wilt of alfalfa).